Here is a 106-residue protein sequence, read N- to C-terminus: Large ribosomal subunit protein eL42 (106 aa).

Belongs to the eukaryotic ribosomal protein eL42 family.

This chain is Large ribosomal subunit protein eL42 (RPL44), found in Yarrowia lipolytica (strain CLIB 122 / E 150) (Yeast).